We begin with the raw amino-acid sequence, 140 residues long: Putative pre-16S rRNA nuclease (140 aa).

It belongs to the YqgF nuclease family.

It localises to the cytoplasm. Functionally, could be a nuclease involved in processing of the 5'-end of pre-16S rRNA. The sequence is that of Putative pre-16S rRNA nuclease from Halalkalibacterium halodurans (strain ATCC BAA-125 / DSM 18197 / FERM 7344 / JCM 9153 / C-125) (Bacillus halodurans).